A 117-amino-acid polypeptide reads, in one-letter code: Type II secretion system protein I (117 aa).

The propeptide at 1-6 (MKSKRG) is leader sequence. At F7 the chain carries N-methylphenylalanine. A helical transmembrane segment spans residues 7 to 27 (FTLLEVLVALAIFATAAISVI).

This sequence belongs to the GSP I family. In terms of assembly, type II secretion is composed of four main components: the outer membrane complex, the inner membrane complex, the cytoplasmic secretion ATPase and the periplasm-spanning pseudopilus. Interacts with core component EpsG. Cleaved by prepilin peptidase. Post-translationally, methylated by prepilin peptidase at the amino group of the N-terminal phenylalanine once the leader sequence is cleaved by prepilin peptidase.

The protein localises to the cell inner membrane. Its function is as follows. Component of the type II secretion system required for the energy-dependent secretion of extracellular factors such as proteases and toxins from the periplasm. Part of the pseudopilus tip complex that is critical for the recognition and binding of secretion substrates. This chain is Type II secretion system protein I (epsI), found in Vibrio cholerae serotype O1 (strain ATCC 39315 / El Tor Inaba N16961).